Here is a 244-residue protein sequence, read N- to C-terminus: MTRKTDDIFAAPLQEMIDFKFDERVVAVFPDMIQRSVPGYGMIISNIGILAAKYAQAGSHCYDLGCSLGAATLSMRQRISQPNCDIIAVDNSPAMIERGRELLARDSQPTVPVALICANIQDVVIENASVVVLNFTLQFIPPEQRLALIKRIHAGLRPGGILILSEKIAFSEPARQHFHVEMHHDFKRANGYSDMEISQKRSALENVMIPETVACHQERLLQAGFSSSELWFQCFNFASMVAFK.

S-adenosyl-L-methionine-binding positions include Tyr40, 65-67 (GCS), 90-91 (DN), Asn134, and Arg201.

This sequence belongs to the class I-like SAM-binding methyltransferase superfamily. Cx-SAM synthase family. In terms of assembly, homodimer.

The enzyme catalyses prephenate + S-adenosyl-L-methionine = carboxy-S-adenosyl-L-methionine + 3-phenylpyruvate + H2O. In terms of biological role, catalyzes the conversion of S-adenosyl-L-methionine (SAM) to carboxy-S-adenosyl-L-methionine (Cx-SAM). This chain is Carboxy-S-adenosyl-L-methionine synthase, found in Citrifermentans bemidjiense (strain ATCC BAA-1014 / DSM 16622 / JCM 12645 / Bem) (Geobacter bemidjiensis).